Reading from the N-terminus, the 259-residue chain is MGLLELCEQVFGTADLYQVLGVRREASDGEVRRGYHKVSLQVHPDRVEEDQKEDATRRFQILGRVYAVLSDKEQKAVYDEQGTVDEDSAGLNQDRDWDAYWRLLFKKISLEDIQAFEKTYKGSEEELNDIKQAYLDFKGDMDQIMESVLCVQYTDEPRIRNIIQKAIESKEIPAYSAFVKESKQKMNARKRRAQEEAKEAELSRKELGLEEGVDNLKALIQSRQKDRQKEMDSFLAQMEAKYCKPSKGGKRTALKKEKK.

Positions 15 to 82 (DLYQVLGVRR…EQKAVYDEQG (68 aa)) constitute a J domain. The residue at position 109 (Ser-109) is a Phosphoserine. The interval 171-248 (EIPAYSAFVK…EAKYCKPSKG (78 aa)) is required for histone binding.

In terms of assembly, forms a co-chaperone complex with MCM2 and histone H3.3-H4 dimers. Within the complex, interacts (via C-terminus) with MCM2 (via N-terminus); the interaction is histone-dependent. Within the complex, interacts (via C-terminus) with histone H3.3-H4 heterodimers; the interaction is direct. Interacts with histones H4, H3.3, H3.2 and H3.1, but not with CENPA or the testis-specific histone H3.1t. Interacts (via J domain) with HSPA1A, HSPA1B and HSPA8. May interact with TONSL; the interaction seems to be histone-dependent. May interact with HSPA8 and BAG2; the interactions seem to be histone-dependent.

It localises to the nucleus. It is found in the cytoplasm. The protein localises to the cell membrane. Its function is as follows. Acts as a dual histone chaperone and heat shock co-chaperone. As a histone chaperone, forms a co-chaperone complex with MCM2 and histone H3-H4 heterodimers; and may thereby assist MCM2 in histone H3-H4 heterodimer recognition and facilitate the assembly of histones into nucleosomes. May also act as a histone co-chaperone together with TONSL. May recruit histone chaperones ASF1A, NASP and SPT2 to histone H3-H4 heterodimers. Also plays a role as co-chaperone of the HSP70 family of molecular chaperone proteins, such as HSPA1A, HSPA1B and HSPA8. As a co-chaperone, may play a role in the recruitment of HSP70-type molecular chaperone machinery to histone H3-H4 substrates, thereby maintaining the histone structural integrity. Exhibits activity to assemble histones onto DNA in vitro. This is DnaJ homolog subfamily C member 9 (Dnajc9) from Mus musculus (Mouse).